The following is a 108-amino-acid chain: Large ribosomal subunit protein eL33A (108 aa).

The protein belongs to the eukaryotic ribosomal protein eL33 family. Component of the large ribosomal subunit (LSU). Mature yeast ribosomes consist of a small (40S) and a large (60S) subunit. The 40S small subunit contains 1 molecule of ribosomal RNA (18S rRNA) and at least 33 different proteins. The large 60S subunit contains 3 rRNA molecules (25S, 5.8S and 5S rRNA) and at least 46 different proteins.

The protein resides in the cytoplasm. The protein localises to the nucleus. It is found in the nucleolus. In terms of biological role, component of the ribosome, a large ribonucleoprotein complex responsible for the synthesis of proteins in the cell. The small ribosomal subunit (SSU) binds messenger RNAs (mRNAs) and translates the encoded message by selecting cognate aminoacyl-transfer RNA (tRNA) molecules. The large subunit (LSU) contains the ribosomal catalytic site termed the peptidyl transferase center (PTC), which catalyzes the formation of peptide bonds, thereby polymerizing the amino acids delivered by tRNAs into a polypeptide chain. The nascent polypeptides leave the ribosome through a tunnel in the LSU and interact with protein factors that function in enzymatic processing, targeting, and the membrane insertion of nascent chains at the exit of the ribosomal tunnel. This Schizosaccharomyces pombe (strain 972 / ATCC 24843) (Fission yeast) protein is Large ribosomal subunit protein eL33A (rpl35b).